The primary structure comprises 196 residues: dITP/XTP pyrophosphatase (196 aa).

Position 10–15 (10–15) interacts with substrate; that stretch reads TSNKGK. The Proton acceptor role is filled by D71. D71 serves as a coordination point for Mg(2+). Substrate contacts are provided by residues S72, 156–159, K179, and 184–185; these read FGYD and HR.

This sequence belongs to the HAM1 NTPase family. Homodimer. It depends on Mg(2+) as a cofactor.

The catalysed reaction is XTP + H2O = XMP + diphosphate + H(+). The enzyme catalyses dITP + H2O = dIMP + diphosphate + H(+). It carries out the reaction ITP + H2O = IMP + diphosphate + H(+). In terms of biological role, pyrophosphatase that catalyzes the hydrolysis of nucleoside triphosphates to their monophosphate derivatives, with a high preference for the non-canonical purine nucleotides XTP (xanthosine triphosphate), dITP (deoxyinosine triphosphate) and ITP. Seems to function as a house-cleaning enzyme that removes non-canonical purine nucleotides from the nucleotide pool, thus preventing their incorporation into DNA/RNA and avoiding chromosomal lesions. This Haemophilus ducreyi (strain 35000HP / ATCC 700724) protein is dITP/XTP pyrophosphatase.